The chain runs to 491 residues: Ketol-acid reductoisomerase (NADP(+)) (491 aa).

One can recognise a KARI N-terminal Rossmann domain in the interval 15–208 (AQLGKCRFMG…GGHRAGVLES (194 aa)). Residues 45-48 (CGAQ), Arg68, Arg76, Ser78, and 108-110 (DKQ) each bind NADP(+). His132 is an active-site residue. Gly158 contributes to the NADP(+) binding site. 2 KARI C-terminal knotted domains span residues 209–344 (SFVA…TAPQ) and 345–484 (YEGK…MTDM). Positions 217, 221, 389, and 393 each coordinate Mg(2+). Ser414 serves as a coordination point for substrate.

The protein belongs to the ketol-acid reductoisomerase family. Mg(2+) is required as a cofactor.

The catalysed reaction is (2R)-2,3-dihydroxy-3-methylbutanoate + NADP(+) = (2S)-2-acetolactate + NADPH + H(+). It catalyses the reaction (2R,3R)-2,3-dihydroxy-3-methylpentanoate + NADP(+) = (S)-2-ethyl-2-hydroxy-3-oxobutanoate + NADPH + H(+). The protein operates within amino-acid biosynthesis; L-isoleucine biosynthesis; L-isoleucine from 2-oxobutanoate: step 2/4. Its pathway is amino-acid biosynthesis; L-valine biosynthesis; L-valine from pyruvate: step 2/4. Involved in the biosynthesis of branched-chain amino acids (BCAA). Catalyzes an alkyl-migration followed by a ketol-acid reduction of (S)-2-acetolactate (S2AL) to yield (R)-2,3-dihydroxy-isovalerate. In the isomerase reaction, S2AL is rearranged via a Mg-dependent methyl migration to produce 3-hydroxy-3-methyl-2-ketobutyrate (HMKB). In the reductase reaction, this 2-ketoacid undergoes a metal-dependent reduction by NADPH to yield (R)-2,3-dihydroxy-isovalerate. This chain is Ketol-acid reductoisomerase (NADP(+)), found in Escherichia coli O6:K15:H31 (strain 536 / UPEC).